The chain runs to 230 residues: Ribose-5-phosphate isomerase A (230 aa).

Substrate-binding positions include 31-34 (TGST), 88-91 (DGSD), and 101-104 (KGGG). The active-site Proton acceptor is glutamate 110. Lysine 128 lines the substrate pocket.

The protein belongs to the ribose 5-phosphate isomerase family. Homodimer.

The catalysed reaction is aldehydo-D-ribose 5-phosphate = D-ribulose 5-phosphate. The protein operates within carbohydrate degradation; pentose phosphate pathway; D-ribose 5-phosphate from D-ribulose 5-phosphate (non-oxidative stage): step 1/1. Functionally, catalyzes the reversible conversion of ribose-5-phosphate to ribulose 5-phosphate. In Lactobacillus helveticus (strain DPC 4571), this protein is Ribose-5-phosphate isomerase A.